The primary structure comprises 100 residues: uncharacterized protein (100 aa).

This is an uncharacterized protein from Saccharomyces cerevisiae (strain ATCC 204508 / S288c) (Baker's yeast).